The primary structure comprises 191 residues: Fe/S biogenesis protein NfuA (191 aa).

[4Fe-4S] cluster-binding residues include Cys149 and Cys152.

This sequence belongs to the NfuA family. In terms of assembly, homodimer. The cofactor is [4Fe-4S] cluster.

In terms of biological role, involved in iron-sulfur cluster biogenesis. Binds a 4Fe-4S cluster, can transfer this cluster to apoproteins, and thereby intervenes in the maturation of Fe/S proteins. Could also act as a scaffold/chaperone for damaged Fe/S proteins. The sequence is that of Fe/S biogenesis protein NfuA from Escherichia coli O139:H28 (strain E24377A / ETEC).